Consider the following 493-residue polypeptide: Ribose import ATP-binding protein RbsA (493 aa).

ABC transporter domains follow at residues 3–239 (IEMK…VGRE) and 246–493 (KRTP…TGGR). Residue 35-42 (GENGAGKS) participates in ATP binding.

This sequence belongs to the ABC transporter superfamily. Ribose importer (TC 3.A.1.2.1) family. The complex is composed of an ATP-binding protein (RbsA), two transmembrane proteins (RbsC) and a solute-binding protein (RbsB).

It is found in the cell membrane. The enzyme catalyses D-ribose(out) + ATP + H2O = D-ribose(in) + ADP + phosphate + H(+). Its function is as follows. Part of the ABC transporter complex RbsABC involved in ribose import. Responsible for energy coupling to the transport system. This chain is Ribose import ATP-binding protein RbsA, found in Bacillus subtilis (strain 168).